Consider the following 539-residue polypeptide: Oviduct-specific glycoprotein (539 aa).

The N-terminal stretch at 1-21 (MGKLLLWVGLLLMLKHHDGAA) is a signal peptide. The GH18 domain maps to 22 to 385 (HKLVCYFTNW…HTLNNLLVND (364 aa)). A disulfide bridge links C26 with C51. Chitin contacts are provided by residues 71-72 (PL), 98-101 (GGWN), Y142, 211-214 (LSYD), and W355. The N-linked (GlcNAc...) asparagine glycan is linked to N402. 2 disordered regions span residues 433-480 (TETH…KPLT) and 503-539 (QKVT…LERL). Residues 440 to 457 (ATMTTTPRGETATPTRTP) show a composition bias toward low complexity.

The protein belongs to the glycosyl hydrolase 18 family. In terms of tissue distribution, oviduct.

It is found in the cytoplasmic vesicle. It localises to the secretory vesicle. Binds to oocyte zona pellucida in vivo. May play a role in the fertilization process and/or early embryonic development. In Ovis aries (Sheep), this protein is Oviduct-specific glycoprotein (OVGP1).